The following is a 465-amino-acid chain: COP9 signalosome complex subunit 5 (465 aa).

The 143-residue stretch at 74 to 216 (VLLSKLACSK…IGSFRTYQDQ (143 aa)) folds into the MPN domain. H162, H164, and D175 together coordinate Zn(2+). The JAMM motif motif lies at 162-175 (HSHPGYDCWLSNID). Residues 364-386 (SSIHTQMNNQNNQQERNSPKRPH) are disordered.

Belongs to the peptidase M67A family. CSN5 subfamily. In terms of assembly, component of the COP9 signalosome (CSN) complex.

It localises to the cytoplasm. It is found in the nucleus. In terms of biological role, catalytic Component of the COP9 signalosome (CSN) complex that acts as an regulator of the ubiquitin (Ubl) conjugation pathway by mediating the deneddylation of the cullin subunit of SCF-type E3 ubiquitin-protein ligase complexes. This Candida glabrata (strain ATCC 2001 / BCRC 20586 / JCM 3761 / NBRC 0622 / NRRL Y-65 / CBS 138) (Yeast) protein is COP9 signalosome complex subunit 5 (RRI1).